The chain runs to 927 residues: Tubulin monoglycylase TTLL3 (927 aa).

Residues 35-47 show a composition bias toward polar residues; it reads RSQPSELRTNFSS. 2 disordered regions span residues 35 to 113 and 194 to 227; these read RSQP…PQPV and HPPG…EENE. The segment covering 216 to 226 has biased composition (acidic residues); it reads DATEDEDEEEN. In terms of domain architecture, TTL spans 345–702; sequence VLKLVVKLEE…DRRLDRSCDT (358 aa). ATP-binding positions include K476, 482 to 483, 514 to 517, 527 to 529, and 571 to 572; these read RG, QKYI, KFD, and CN. R482 lines the a protein pocket. Residues D649, E662, and N664 each contribute to the Mg(2+) site. E662 provides a ligand contact to ATP. Disordered stretches follow at residues 735-799 and 897-927; these read VPVG…SGKG and EEGH…KTET. Positions 752-769 are enriched in polar residues; the sequence is LTQQGSGESKDSGSPTHR. Residues 776-788 show a composition bias toward basic and acidic residues; the sequence is ARAESLEHTEKPE. The span at 916 to 927 shows a compositional bias: polar residues; that stretch reads LSSTEPCSKTET.

Mg(2+) is required as a cofactor. Highly expressed in brain and testis. Expressed in heart, kidney, liver, lung, muscle, spleen, trachea and colon. Expressed in sperm flagellum. In the brain, specifically expressed in ependymal cilia.

Its subcellular location is the cytoplasm. The protein localises to the cytoskeleton. It is found in the cell projection. It localises to the cilium. The protein resides in the cilium axoneme. Its subcellular location is the flagellum axoneme. The catalysed reaction is L-glutamyl-[protein] + glycine + ATP = glycyl-L-glutamyl-[protein] + ADP + phosphate + H(+). In terms of biological role, monoglycylase which modifies alpha- and beta-tubulin, adding a single glycine on the gamma-carboxyl groups of specific glutamate residues to generate monoglycine side chains within the C-terminal tail of tubulin. Not involved in elongation step of the polyglycylation reaction. Preferentially glycylates a beta-tail peptide over the alpha-tail, although shifts its preference toward alpha-tail as beta-tail glutamylation increases. Competes with polyglutamylases for modification site on beta-tubulin substrate, thereby creating an anticorrelation between glycylation and glutamylation reactions. Together with TTLL8, mediates microtubule glycylation of primary and motile cilia, which is essential for their stability and maintenance. Involved in microtubule glycylation of primary cilia in colon which controls cell proliferation of epithelial cells and plays an essential role in colon cancer development. Together with TTLL8, glycylates sperm flagella which regulates axonemal dynein motor activity, thereby controlling flagellar beat, directional sperm swimming and male fertility. The polypeptide is Tubulin monoglycylase TTLL3 (Mus musculus (Mouse)).